The following is a 1198-amino-acid chain: DNA polymerase II large subunit (1198 aa).

Disordered regions lie at residues 281 to 332 (YKTG…PQKK) and 534 to 553 (HWAE…AAES). Over residues 286–319 (DTDEADADSDDGTDEDAADDSDIDDSSAGDEEAD) the composition is skewed to acidic residues.

The protein belongs to the archaeal DNA polymerase II family. Heterodimer of a large subunit and a small subunit.

The enzyme catalyses DNA(n) + a 2'-deoxyribonucleoside 5'-triphosphate = DNA(n+1) + diphosphate. It catalyses the reaction Exonucleolytic cleavage in the 3'- to 5'-direction to yield nucleoside 5'-phosphates.. Its function is as follows. Possesses two activities: a DNA synthesis (polymerase) and an exonucleolytic activity that degrades single-stranded DNA in the 3'- to 5'-direction. Has a template-primer preference which is characteristic of a replicative DNA polymerase. The chain is DNA polymerase II large subunit from Natronomonas pharaonis (strain ATCC 35678 / DSM 2160 / CIP 103997 / JCM 8858 / NBRC 14720 / NCIMB 2260 / Gabara) (Halobacterium pharaonis).